The primary structure comprises 211 residues: MAQAKINAKANEGRFCRSSSMADRSSRLLESLDQLELRVEALREAATAVEQEKEILLEMIHSIQNSQDMRQISDGEREELNLTANRLMGRTLTVEVSVETIRNPQQQESLKHATRIIDEVVNKFLDDLGNAKSHLMSLYSACSSEVPHGPVDQKFQSIVIGCALEDQKKIKRRLETLLRNIENSDKAIKLLEHSKGAGSKTLQQNAESRFN.

A2 is subject to N-acetylalanine. S20, S31, and S73 each carry phosphoserine. Residues S20–H61 adopt a coiled-coil conformation. In terms of domain architecture, BAG spans S109–K189.

In terms of assembly, binds to the ATPase domain of HSP/HSC70 chaperones. May interact with NWD1. Interacts with HSPA1A (via NBD), HSPA1B (via NBD) and HSPA8. May interact with DNJC9; the interaction seems to be histone-dependent.

Co-chaperone for HSP70 and HSC70 chaperone proteins. Acts as a nucleotide-exchange factor (NEF) promoting the release of ADP from the HSP70 and HSC70 proteins thereby triggering client/substrate protein release. The sequence is that of BAG family molecular chaperone regulator 2 (BAG2) from Homo sapiens (Human).